The primary structure comprises 481 residues: Threonine synthase (481 aa).

An N6-(pyridoxal phosphate)lysine modification is found at Lys-118.

The protein belongs to the threonine synthase family. Monomer. The cofactor is pyridoxal 5'-phosphate.

It carries out the reaction O-phospho-L-homoserine + H2O = L-threonine + phosphate. It participates in amino-acid biosynthesis; L-threonine biosynthesis; L-threonine from L-aspartate: step 5/5. Functionally, catalyzes the gamma-elimination of phosphate from L-phosphohomoserine and the beta-addition of water to produce L-threonine. This Corynebacterium glutamicum (strain ATCC 13032 / DSM 20300 / JCM 1318 / BCRC 11384 / CCUG 27702 / LMG 3730 / NBRC 12168 / NCIMB 10025 / NRRL B-2784 / 534) protein is Threonine synthase (thrC).